The sequence spans 80 residues: Small ribosomal subunit protein bS16 (80 aa).

This sequence belongs to the bacterial ribosomal protein bS16 family.

The chain is Small ribosomal subunit protein bS16 from Acholeplasma laidlawii (strain PG-8A).